The chain runs to 1049 residues: FERM, ARHGEF and pleckstrin domain-containing protein 1 (1049 aa).

The tract at residues 1–37 (MGEIEQKPTPASRLGAPENSGISTLERGQKPPPTPSG) is disordered. 2 positions are modified to phosphoserine: S20 and S23. T24 carries the phosphothreonine modification. An FERM domain is found at 40–320 (MTVKIQMLDD…EHHAFFRLFE (281 aa)). A phosphoserine mark is found at S340, S373, S389, S403, S427, S433, and S437. The tract at residues 361-537 (FERKHSKIHS…TDDEEEGRRK (177 aa)) is disordered. Polar residues-rich tracts occupy residues 371 to 395 (TRSL…SASL) and 402 to 412 (ESPSAQSCQQA). The span at 435 to 448 (SGSKAADGTAAAAP) shows a compositional bias: low complexity. Polar residues-rich tracts occupy residues 473–492 (STGS…NSQG) and 499–514 (VTLS…QASP). Residues S513 and S517 each carry the phosphoserine modification. The 192-residue stretch at 543–734 (KAYYIAKEVS…TEMVAQLHGT (192 aa)) folds into the DH domain. One can recognise a PH 1 domain in the interval 763 to 860 (EFIRLGSLSK…WLEDIQMAID (98 aa)). A phosphoserine mark is found at S837, S876, and S882. A disordered region spans residues 866-908 (NGPTPELLASSPPDNKSPDEATAADQESEDDLSASRTSLERQA). The residue at position 887 (T887) is a Phosphothreonine. Phosphoserine is present on residues S893, S900, and S903. In terms of domain architecture, PH 2 spans 936–1033 (ENQLSGNLLR…WMEVIRSATS (98 aa)).

As to quaternary structure, interacts with CADM1. Interacts with RAC1. As to expression, detected in forbrain (at protein level).

It localises to the cell membrane. Its subcellular location is the synapse. It is found in the synaptosome. The protein localises to the cytoplasm. The protein resides in the cytosol. It localises to the cell projection. Its subcellular location is the filopodium. It is found in the dendrite. The protein localises to the dendritic spine. May play a role in semaphorin signaling. Functions as a guanine nucleotide exchange factor for RAC1. Plays a role in the assembly and disassembly of dendritic filopodia, the formation of dendritic spines, regulation of dendrite length and ultimately the formation of synapses. The protein is FERM, ARHGEF and pleckstrin domain-containing protein 1 (Farp1) of Rattus norvegicus (Rat).